The chain runs to 390 residues: tRNA(Met) cytidine acetate ligase (390 aa).

ATP is bound by residues 7-20, Gly101, Asn162, and Arg187; that span reads VVEYNPFHNGHKLH.

It belongs to the TmcAL family.

Its subcellular location is the cytoplasm. It carries out the reaction cytidine(34) in elongator tRNA(Met) + acetate + ATP = N(4)-acetylcytidine(34) in elongator tRNA(Met) + AMP + diphosphate. Its function is as follows. Catalyzes the formation of N(4)-acetylcytidine (ac(4)C) at the wobble position of elongator tRNA(Met), using acetate and ATP as substrates. First activates an acetate ion to form acetyladenylate (Ac-AMP) and then transfers the acetyl group to tRNA to form ac(4)C34. The polypeptide is tRNA(Met) cytidine acetate ligase (Listeria monocytogenes serovar 1/2a (strain ATCC BAA-679 / EGD-e)).